We begin with the raw amino-acid sequence, 270 residues long: Type III pantothenate kinase (270 aa).

Residue 11 to 18 participates in ATP binding; sequence DAGNSRIK. Substrate contacts are provided by residues tyrosine 96 and 103-106; that span reads GSDR. The active-site Proton acceptor is aspartate 105. Residue threonine 129 participates in ATP binding. Threonine 195 serves as a coordination point for substrate.

This sequence belongs to the type III pantothenate kinase family. Homodimer. It depends on NH4(+) as a cofactor. Requires K(+) as cofactor.

The protein resides in the cytoplasm. The enzyme catalyses (R)-pantothenate + ATP = (R)-4'-phosphopantothenate + ADP + H(+). It functions in the pathway cofactor biosynthesis; coenzyme A biosynthesis; CoA from (R)-pantothenate: step 1/5. Catalyzes the phosphorylation of pantothenate (Pan), the first step in CoA biosynthesis. The sequence is that of Type III pantothenate kinase from Paraburkholderia xenovorans (strain LB400).